A 399-amino-acid chain; its full sequence is Probable inactive 2-oxoglutarate-dependent dioxygenase AOP2 (399 aa).

Residues 248–345 (GGDDVEANDD…RYTAAIFTCP (98 aa)) form the Fe2OG dioxygenase domain. Fe cation is bound by residues H268, D270, and H325. R336 serves as a coordination point for 2-oxoglutarate.

The protein belongs to the iron/ascorbate-dependent oxidoreductase family. Fe(2+) is required as a cofactor.

In Arabidopsis thaliana (Mouse-ear cress), this protein is Probable inactive 2-oxoglutarate-dependent dioxygenase AOP2 (AOP2).